A 333-amino-acid polypeptide reads, in one-letter code: Adenosine deaminase (333 aa).

Residues histidine 12 and histidine 14 each contribute to the Zn(2+) site. Positions 14, 16, and 170 each coordinate substrate. Histidine 197 serves as a coordination point for Zn(2+). Residue glutamate 200 is the Proton donor of the active site. Aspartate 278 lines the Zn(2+) pocket. Aspartate 279 contributes to the substrate binding site.

The protein belongs to the metallo-dependent hydrolases superfamily. Adenosine and AMP deaminases family. Adenosine deaminase subfamily. Zn(2+) serves as cofactor.

It carries out the reaction adenosine + H2O + H(+) = inosine + NH4(+). The catalysed reaction is 2'-deoxyadenosine + H2O + H(+) = 2'-deoxyinosine + NH4(+). Functionally, catalyzes the hydrolytic deamination of adenosine and 2-deoxyadenosine. The chain is Adenosine deaminase from Edwardsiella ictaluri (strain 93-146).